Here is a 318-residue protein sequence, read N- to C-terminus: tRNA dimethylallyltransferase (318 aa).

13–20 (GPTAVGKT) is a binding site for ATP. Residue 15 to 20 (TAVGKT) coordinates substrate. Positions 38–41 (DSMQ) are interaction with substrate tRNA.

This sequence belongs to the IPP transferase family. As to quaternary structure, monomer. Requires Mg(2+) as cofactor.

It carries out the reaction adenosine(37) in tRNA + dimethylallyl diphosphate = N(6)-dimethylallyladenosine(37) in tRNA + diphosphate. In terms of biological role, catalyzes the transfer of a dimethylallyl group onto the adenine at position 37 in tRNAs that read codons beginning with uridine, leading to the formation of N6-(dimethylallyl)adenosine (i(6)A). The sequence is that of tRNA dimethylallyltransferase from Bacillus pumilus (strain SAFR-032).